A 64-amino-acid chain; its full sequence is Large ribosomal subunit protein uL30 (64 aa).

It belongs to the universal ribosomal protein uL30 family. Part of the 50S ribosomal subunit.

The protein is Large ribosomal subunit protein uL30 of Desulforudis audaxviator (strain MP104C).